We begin with the raw amino-acid sequence, 297 residues long: Large ribosomal subunit protein uL18 (297 aa).

The residue at position 2 (Gly-2) is an N-acetylglycine. An N6-acetyllysine mark is found at Lys-5 and Lys-48. Phosphoserine is present on Ser-185. Lys-220 is modified (N6-acetyllysine; alternate). Lys-220 participates in a covalent cross-link: Glycyl lysine isopeptide (Lys-Gly) (interchain with G-Cter in SUMO1); alternate. Lys-220 is covalently cross-linked (Glycyl lysine isopeptide (Lys-Gly) (interchain with G-Cter in SUMO2); alternate). Thr-232 is subject to Phosphothreonine. The disordered stretch occupies residues Tyr-253–Ser-297. The segment covering Lys-258–Arg-268 has biased composition (basic residues). Ser-272 carries the phosphoserine modification.

This sequence belongs to the universal ribosomal protein uL18 family. In terms of assembly, component of the large ribosomal subunit (LSU). Part of the 5S RNP complex, which is a LSU subcomplex composed of the 5S RNA, RPL5 and RPL11. Component of a hexameric 5S RNP precursor complex, composed of 5S RNA, RRS1, RPF2/BXDC1, RPL5, RPL11 and HEATR3; this complex acts as a precursor for ribosome assembly. Interacts with isoform 1 of NVL in an ATP-dependent manner. Interacts with RRP1B. Interacts with IPO5, IPO7 and KPNB1; these interactions may be involved in RPL5 nuclear import for the assembly of ribosomal subunits.

It is found in the cytoplasm. Its subcellular location is the nucleus. It localises to the nucleolus. In terms of biological role, component of the ribosome, a large ribonucleoprotein complex responsible for the synthesis of proteins in the cell. The small ribosomal subunit (SSU) binds messenger RNAs (mRNAs) and translates the encoded message by selecting cognate aminoacyl-transfer RNA (tRNA) molecules. The large subunit (LSU) contains the ribosomal catalytic site termed the peptidyl transferase center (PTC), which catalyzes the formation of peptide bonds, thereby polymerizing the amino acids delivered by tRNAs into a polypeptide chain. The nascent polypeptides leave the ribosome through a tunnel in the LSU and interact with protein factors that function in enzymatic processing, targeting, and the membrane insertion of nascent chains at the exit of the ribosomal tunnel. As part of the 5S RNP/5S ribonucleoprotein particle it is an essential component of the LSU, required for its formation and the maturation of rRNAs. It also couples ribosome biogenesis to p53/TP53 activation. As part of the 5S RNP it accumulates in the nucleoplasm and inhibits MDM2, when ribosome biogenesis is perturbed, mediating the stabilization and the activation of TP53. This is Large ribosomal subunit protein uL18 (RPL5) from Oryctolagus cuniculus (Rabbit).